The sequence spans 557 residues: Polypyrimidine tract-binding protein 1 (557 aa).

Residue M1 is modified to N-acetylmethionine. S16 carries the phosphoserine modification. RRM domains follow at residues 59–143 (RVIH…SSPN), 184–260 (LRII…FSKL), and 363–437 (SVLL…LSKH). K65 participates in a covalent cross-link: Glycyl lysine isopeptide (Lys-Gly) (interchain with G-Cter in SUMO2). The residue at position 127 (Y127) is a Phosphotyrosine. Phosphothreonine is present on T138. S141 carries the post-translational modification Phosphoserine. Residue K218 forms a Glycyl lysine isopeptide (Lys-Gly) (interchain with G-Cter in SUMO2) linkage. The disordered stretch occupies residues 437–460 (HQSVQLPREGQEDQGLTKDYGNSP). A Phosphoserine modification is found at S459. In terms of domain architecture, RRM 4 spans 480-555 (ATLHLSNIPP…HHLRVSFSKS (76 aa)).

Monomer. Part of a ternary complex containing KHSRP, PTBP1, PTBP2 and HNRPH1. Interacts with RAVER1 and SFPQ.

It is found in the nucleus. In terms of biological role, plays a role in pre-mRNA splicing and in the regulation of alternative splicing events. Activates exon skipping of its own pre-mRNA during muscle cell differentiation. Binds to the polypyrimidine tract of introns. May promote RNA looping when bound to two separate polypyrimidine tracts in the same pre-mRNA. May promote the binding of U2 snRNP to pre-mRNA. Cooperates with RAVER1 to modulate switching between mutually exclusive exons during maturation of the TPM1 pre-mRNA. Represses the splicing of MAPT/Tau exon 10. Binds to polypyrimidine-rich controlling element (PCE) of CFTR and promotes exon skipping of CFTR exon 9, thereby antagonizing TIA1 and its role in exon inclusion of CFTR exon 9. Plays a role in the splicing of pyruvate kinase PKM by binding repressively to a polypyrimidine tract flanking PKM exon 9, inhibiting exon 9 inclusion and resulting in exon 10 inclusion and production of the PKM M2 isoform. The polypeptide is Polypyrimidine tract-binding protein 1 (PTBP1) (Bos taurus (Bovine)).